The chain runs to 194 residues: Imidazoleglycerol-phosphate dehydratase (194 aa).

Belongs to the imidazoleglycerol-phosphate dehydratase family.

The protein resides in the cytoplasm. The catalysed reaction is D-erythro-1-(imidazol-4-yl)glycerol 3-phosphate = 3-(imidazol-4-yl)-2-oxopropyl phosphate + H2O. It participates in amino-acid biosynthesis; L-histidine biosynthesis; L-histidine from 5-phospho-alpha-D-ribose 1-diphosphate: step 6/9. The protein is Imidazoleglycerol-phosphate dehydratase of Bacillus thuringiensis (strain Al Hakam).